Consider the following 328-residue polypeptide: DNA-directed RNA polymerase subunit alpha 1 (328 aa).

Residues 1–234 form an alpha N-terminal domain (alpha-NTD) region; it reads MQGFVKDFLK…GQLDEFVDER (234 aa). The tract at residues 248–328 is alpha C-terminal domain (alpha-CTD); sequence FDPILLRPVN…NWPPASLIED (81 aa).

Belongs to the RNA polymerase alpha chain family. In terms of assembly, homodimer. The RNAP catalytic core consists of 2 alpha, 1 beta, 1 beta' and 1 omega subunit. When a sigma factor is associated with the core the holoenzyme is formed, which can initiate transcription.

It carries out the reaction RNA(n) + a ribonucleoside 5'-triphosphate = RNA(n+1) + diphosphate. In terms of biological role, DNA-dependent RNA polymerase catalyzes the transcription of DNA into RNA using the four ribonucleoside triphosphates as substrates. The protein is DNA-directed RNA polymerase subunit alpha 1 of Psychromonas ingrahamii (strain DSM 17664 / CCUG 51855 / 37).